The primary structure comprises 210 residues: MQKSLHSKLFKIIGFFGGSFDPIHYGHLKNAAQLKDKLRLSKLFLMPCDKPVHKKQLNFSINQRIDMLHLAIKEFNTLSIDTREIKQNKNSYTINSLKYIQSKYQNNSICLIMGMDSFNTLSSWEECQNFYQYCHLVIMSRPGILTYQKKYGFRLTNIINDLTKQKTGFIFFANNQMLNISSSTIQGKIKSQKNLSGLLPDSIINYINAL.

The protein belongs to the NadD family.

It catalyses the reaction nicotinate beta-D-ribonucleotide + ATP + H(+) = deamido-NAD(+) + diphosphate. It functions in the pathway cofactor biosynthesis; NAD(+) biosynthesis; deamido-NAD(+) from nicotinate D-ribonucleotide: step 1/1. Functionally, catalyzes the reversible adenylation of nicotinate mononucleotide (NaMN) to nicotinic acid adenine dinucleotide (NaAD). The sequence is that of Probable nicotinate-nucleotide adenylyltransferase from Vesicomyosocius okutanii subsp. Calyptogena okutanii (strain HA).